Consider the following 214-residue polypeptide: Pyridoxine/pyridoxamine 5'-phosphate oxidase (214 aa).

Substrate is bound by residues 8 to 11 (RINY) and Lys66. FMN-binding positions include 61-66 (RIVLIK), 76-77 (FT), Arg82, Lys83, and Gln105. Tyr123, Arg127, and Ser131 together coordinate substrate. Residues 140-141 (QS) and Trp184 contribute to the FMN site. 190 to 192 (RLH) contacts substrate. Arg194 serves as a coordination point for FMN.

It belongs to the pyridoxamine 5'-phosphate oxidase family. Homodimer. FMN is required as a cofactor.

It catalyses the reaction pyridoxamine 5'-phosphate + O2 + H2O = pyridoxal 5'-phosphate + H2O2 + NH4(+). It carries out the reaction pyridoxine 5'-phosphate + O2 = pyridoxal 5'-phosphate + H2O2. It functions in the pathway cofactor metabolism; pyridoxal 5'-phosphate salvage; pyridoxal 5'-phosphate from pyridoxamine 5'-phosphate: step 1/1. It participates in cofactor metabolism; pyridoxal 5'-phosphate salvage; pyridoxal 5'-phosphate from pyridoxine 5'-phosphate: step 1/1. Functionally, catalyzes the oxidation of either pyridoxine 5'-phosphate (PNP) or pyridoxamine 5'-phosphate (PMP) into pyridoxal 5'-phosphate (PLP). This is Pyridoxine/pyridoxamine 5'-phosphate oxidase from Burkholderia ambifaria (strain ATCC BAA-244 / DSM 16087 / CCUG 44356 / LMG 19182 / AMMD) (Burkholderia cepacia (strain AMMD)).